The primary structure comprises 348 residues: Holliday junction branch migration complex subunit RuvB (348 aa).

A large ATPase domain (RuvB-L) region spans residues 4–184; sequence ADRLIAASGR…FGIVQRLEFY (181 aa). Residues isoleucine 23, arginine 24, glycine 65, lysine 68, threonine 69, threonine 70, 131–133, arginine 174, tyrosine 184, and arginine 221 contribute to the ATP site; that span reads EDF. Mg(2+) is bound at residue threonine 69. The interval 185–255 is small ATPAse domain (RuvB-S); that stretch reads NDKDLSTIVS…VADMALNLLD (71 aa). The head domain (RuvB-H) stretch occupies residues 258–348; sequence ERGFDHSDRR…GGDFSGPGDE (91 aa). 3 residues coordinate DNA: arginine 294, arginine 313, and arginine 318.

The protein belongs to the RuvB family. Homohexamer. Forms an RuvA(8)-RuvB(12)-Holliday junction (HJ) complex. HJ DNA is sandwiched between 2 RuvA tetramers; dsDNA enters through RuvA and exits via RuvB. An RuvB hexamer assembles on each DNA strand where it exits the tetramer. Each RuvB hexamer is contacted by two RuvA subunits (via domain III) on 2 adjacent RuvB subunits; this complex drives branch migration. In the full resolvosome a probable DNA-RuvA(4)-RuvB(12)-RuvC(2) complex forms which resolves the HJ.

The protein localises to the cytoplasm. It carries out the reaction ATP + H2O = ADP + phosphate + H(+). In terms of biological role, the RuvA-RuvB-RuvC complex processes Holliday junction (HJ) DNA during genetic recombination and DNA repair, while the RuvA-RuvB complex plays an important role in the rescue of blocked DNA replication forks via replication fork reversal (RFR). RuvA specifically binds to HJ cruciform DNA, conferring on it an open structure. The RuvB hexamer acts as an ATP-dependent pump, pulling dsDNA into and through the RuvAB complex. RuvB forms 2 homohexamers on either side of HJ DNA bound by 1 or 2 RuvA tetramers; 4 subunits per hexamer contact DNA at a time. Coordinated motions by a converter formed by DNA-disengaged RuvB subunits stimulates ATP hydrolysis and nucleotide exchange. Immobilization of the converter enables RuvB to convert the ATP-contained energy into a lever motion, pulling 2 nucleotides of DNA out of the RuvA tetramer per ATP hydrolyzed, thus driving DNA branch migration. The RuvB motors rotate together with the DNA substrate, which together with the progressing nucleotide cycle form the mechanistic basis for DNA recombination by continuous HJ branch migration. Branch migration allows RuvC to scan DNA until it finds its consensus sequence, where it cleaves and resolves cruciform DNA. The chain is Holliday junction branch migration complex subunit RuvB from Pseudomonas putida (strain ATCC 700007 / DSM 6899 / JCM 31910 / BCRC 17059 / LMG 24140 / F1).